Consider the following 119-residue polypeptide: Divalent-cation tolerance protein CutA (119 aa).

Cu cation is bound by residues C23, H90, and H91.

The protein belongs to the CutA family. As to quaternary structure, homotrimer. It depends on Cu cation as a cofactor.

It localises to the cytoplasm. Its function is as follows. Involved in resistance toward heavy metals. This chain is Divalent-cation tolerance protein CutA, found in Yersinia pseudotuberculosis serotype O:1b (strain IP 31758).